Consider the following 587-residue polypeptide: Arginine--tRNA ligase (587 aa).

A 'HIGH' region motif is present at residues 127-137 (PNLAKEMHVGH).

This sequence belongs to the class-I aminoacyl-tRNA synthetase family. As to quaternary structure, monomer.

The protein resides in the cytoplasm. It catalyses the reaction tRNA(Arg) + L-arginine + ATP = L-arginyl-tRNA(Arg) + AMP + diphosphate. This is Arginine--tRNA ligase from Pseudomonas aeruginosa (strain UCBPP-PA14).